We begin with the raw amino-acid sequence, 426 residues long: Phosphomethylpyrimidine synthase (426 aa).

Substrate-binding positions include M94, Y123, H162, 184–186 (SRG), 225–228 (NGMR), and E264. H268 serves as a coordination point for Zn(2+). Y291 serves as a coordination point for substrate. H332 contributes to the Zn(2+) binding site. [4Fe-4S] cluster is bound by residues C406, C409, and C413.

This sequence belongs to the ThiC family. Requires [4Fe-4S] cluster as cofactor.

It catalyses the reaction 5-amino-1-(5-phospho-beta-D-ribosyl)imidazole + S-adenosyl-L-methionine = 4-amino-2-methyl-5-(phosphooxymethyl)pyrimidine + CO + 5'-deoxyadenosine + formate + L-methionine + 3 H(+). The protein operates within cofactor biosynthesis; thiamine diphosphate biosynthesis. Catalyzes the synthesis of the hydroxymethylpyrimidine phosphate (HMP-P) moiety of thiamine from aminoimidazole ribotide (AIR) in a radical S-adenosyl-L-methionine (SAM)-dependent reaction. The sequence is that of Phosphomethylpyrimidine synthase from Methanospirillum hungatei JF-1 (strain ATCC 27890 / DSM 864 / NBRC 100397 / JF-1).